The chain runs to 732 residues: Prolyl tripeptidyl peptidase (732 aa).

An N-terminal signal peptide occupies residues 1 to 24 (MKKTIFQQLFLSVCALTVALPCSA). Active-site charge relay system residues include serine 603, aspartate 678, and histidine 710.

It belongs to the peptidase S9B family.

It carries out the reaction Hydrolysis of Xaa-Xaa-Pro-|-Yaa- releasing the N-terminal tripeptide of a peptide with Pro as the third residue (position P1) and where Yaa is not proline.. Serine proteinase. Releases tripeptides from the free amino terminus of proteins. Has a requirement for Pro in the P1 position, but is inactivated by Pro in the P1' position. This Porphyromonas gingivalis (strain ATCC 33277 / DSM 20709 / CIP 103683 / JCM 12257 / NCTC 11834 / 2561) protein is Prolyl tripeptidyl peptidase.